A 231-amino-acid polypeptide reads, in one-letter code: ATP-dependent dethiobiotin synthetase BioD (231 aa).

13-18 (DVGKTV) is a binding site for ATP. Residue T17 coordinates Mg(2+). K38 is an active-site residue. ATP is bound by residues D55, 116-119 (EGAG), and 176-177 (NR). Mg(2+)-binding residues include D55 and E116.

The protein belongs to the dethiobiotin synthetase family. Homodimer. Requires Mg(2+) as cofactor.

It localises to the cytoplasm. It carries out the reaction (7R,8S)-7,8-diammoniononanoate + CO2 + ATP = (4R,5S)-dethiobiotin + ADP + phosphate + 3 H(+). It functions in the pathway cofactor biosynthesis; biotin biosynthesis; biotin from 7,8-diaminononanoate: step 1/2. Its function is as follows. Catalyzes a mechanistically unusual reaction, the ATP-dependent insertion of CO2 between the N7 and N8 nitrogen atoms of 7,8-diaminopelargonic acid (DAPA, also called 7,8-diammoniononanoate) to form a ureido ring. This chain is ATP-dependent dethiobiotin synthetase BioD, found in Vibrio cholerae serotype O1 (strain ATCC 39315 / El Tor Inaba N16961).